A 302-amino-acid chain; its full sequence is Glycine--tRNA ligase alpha subunit (302 aa).

The protein belongs to the class-II aminoacyl-tRNA synthetase family. In terms of assembly, tetramer of two alpha and two beta subunits.

Its subcellular location is the cytoplasm. The enzyme catalyses tRNA(Gly) + glycine + ATP = glycyl-tRNA(Gly) + AMP + diphosphate. The chain is Glycine--tRNA ligase alpha subunit from Psychromonas ingrahamii (strain DSM 17664 / CCUG 51855 / 37).